Reading from the N-terminus, the 440-residue chain is Cell division protein DivIB (440 aa).

Residues 1-10 (MMDDKTKNDQ) show a composition bias toward basic and acidic residues. Disordered regions lie at residues 1–97 (MMDD…DSNI) and 123–154 (QHQSAPNEQNSDSNDEETVTKKERKSKVTQLK). Over 1-174 (MMDDKTKNDQ…RRKRQKRIQY (174 aa)) the chain is Cytoplasmic. The span at 12–21 (ESNEDKDELE) shows a compositional bias: acidic residues. The span at 27–39 (TSKKRRQRKRSKA) shows a compositional bias: basic residues. Positions 78-87 (DSASSHANDN) are enriched in low complexity. The span at 88-97 (NIDDSTDSNI) shows a compositional bias: acidic residues. A compositionally biased stretch (polar residues) spans 124–134 (HQSAPNEQNSD). The chain crosses the membrane as a helical span at residues 175-195 (SVITILVLLIAVILIYMFSPL). In terms of domain architecture, POTRA spans 196–264 (SKIAHVNING…NTLNVDITEN (69 aa)). Topologically, residues 196-440 (SKIAHVNING…KINKQSSKNN (245 aa)) are extracellular. The segment at 397 to 440 (YRGNTSTQSESDKNVTKSSQEENQAKEELQSVLNKINKQSSKNN) is disordered. Basic and acidic residues predominate over residues 406-425 (ESDKNVTKSSQEENQAKEEL). Polar residues predominate over residues 427-440 (SVLNKINKQSSKNN).

Belongs to the FtsQ/DivIB family. DivIB subfamily.

It localises to the cell membrane. In terms of biological role, cell division protein that may be involved in stabilizing or promoting the assembly of the division complex. The protein is Cell division protein DivIB of Staphylococcus aureus (strain MRSA252).